The primary structure comprises 533 residues: Calcium-dependent protein kinase 8 (533 aa).

The segment at 1–21 (MGNCCASPGSETGSKKGKPKI) is disordered. Residue G2 is the site of N-myristoyl glycine attachment. Residues 57-315 (YDLGREVGRG…AAQVLEHSWI (259 aa)) enclose the Protein kinase domain. ATP is bound by residues 63 to 71 (VGRGEFGIT) and K86. D181 functions as the Proton acceptor in the catalytic mechanism. Residue S221 is modified to Phosphoserine. The tract at residues 321 to 351 (APNVSLGETVKARLKQFSVMNKLKKRALRVI) is autoinhibitory domain. EF-hand domains lie at 358 to 394 (EEVA…GQQQ), 395 to 430 (IPDT…LKKM), 431 to 466 (ANDE…EVDT), and 467 to 502 (NSEE…GTDW). Residues D371, T375, K377, E382, D408, D410, D412, T414, E419, D444, N446, S448, Y450, E455, D480, D482, D484, and R486 each coordinate Ca(2+). S488 bears the Phosphoserine mark. E491 serves as a coordination point for Ca(2+). A Phosphoserine modification is found at S526.

Belongs to the protein kinase superfamily. Ser/Thr protein kinase family. CDPK subfamily.

Its subcellular location is the cell membrane. It carries out the reaction L-seryl-[protein] + ATP = O-phospho-L-seryl-[protein] + ADP + H(+). It catalyses the reaction L-threonyl-[protein] + ATP = O-phospho-L-threonyl-[protein] + ADP + H(+). Its activity is regulated as follows. Activated by calcium. Autophosphorylation may play an important role in the regulation of the kinase activity. Its function is as follows. May play a role in signal transduction pathways that involve calcium as a second messenger. The polypeptide is Calcium-dependent protein kinase 8 (CPK8) (Arabidopsis thaliana (Mouse-ear cress)).